The following is a 675-amino-acid chain: DNA ligase (675 aa).

NAD(+) is bound by residues 36–40 (DAVYD), 85–86 (SL), and Glu-118. Residue Lys-120 is the N6-AMP-lysine intermediate of the active site. NAD(+)-binding residues include Arg-141, Glu-178, Lys-298, and Lys-322. Residues Cys-416, Cys-419, Cys-434, and Cys-439 each coordinate Zn(2+). The BRCT domain occupies 598 to 675 (TQPQTLSGKT…SEADLLALLQ (78 aa)).

It belongs to the NAD-dependent DNA ligase family. LigA subfamily. Mg(2+) is required as a cofactor. Mn(2+) serves as cofactor.

The enzyme catalyses NAD(+) + (deoxyribonucleotide)n-3'-hydroxyl + 5'-phospho-(deoxyribonucleotide)m = (deoxyribonucleotide)n+m + AMP + beta-nicotinamide D-nucleotide.. In terms of biological role, DNA ligase that catalyzes the formation of phosphodiester linkages between 5'-phosphoryl and 3'-hydroxyl groups in double-stranded DNA using NAD as a coenzyme and as the energy source for the reaction. It is essential for DNA replication and repair of damaged DNA. This Acaryochloris marina (strain MBIC 11017) protein is DNA ligase.